The primary structure comprises 90 residues: DNA-directed RNA polymerase subunit omega (90 aa).

Belongs to the RNA polymerase subunit omega family. The RNAP catalytic core consists of 2 alpha, 1 beta, 1 beta' and 1 omega subunit. When a sigma factor is associated with the core the holoenzyme is formed, which can initiate transcription.

The catalysed reaction is RNA(n) + a ribonucleoside 5'-triphosphate = RNA(n+1) + diphosphate. Functionally, promotes RNA polymerase assembly. Latches the N- and C-terminal regions of the beta' subunit thereby facilitating its interaction with the beta and alpha subunits. Required for kasugamycin production and aerial mycelium formation in S.kasugaensis and responsible for pleiotropy. This chain is DNA-directed RNA polymerase subunit omega (rpoZ), found in Streptomyces kasugaensis.